The sequence spans 149 residues: Nucleoside diphosphate kinase (149 aa).

Residues Lys9, Phe57, Arg85, Thr91, Arg102, and Asn112 each contribute to the ATP site. Catalysis depends on His115, which acts as the Pros-phosphohistidine intermediate.

Belongs to the NDK family. It depends on Mg(2+) as a cofactor.

Its subcellular location is the cytoplasm. The enzyme catalyses a 2'-deoxyribonucleoside 5'-diphosphate + ATP = a 2'-deoxyribonucleoside 5'-triphosphate + ADP. The catalysed reaction is a ribonucleoside 5'-diphosphate + ATP = a ribonucleoside 5'-triphosphate + ADP. Functionally, major role in the synthesis of nucleoside triphosphates other than ATP. The ATP gamma phosphate is transferred to the NDP beta phosphate via a ping-pong mechanism, using a phosphorylated active-site intermediate. The polypeptide is Nucleoside diphosphate kinase (Methanoculleus marisnigri (strain ATCC 35101 / DSM 1498 / JR1)).